A 457-amino-acid polypeptide reads, in one-letter code: Ribosomal RNA-processing protein 8 (457 aa).

The interval 47–237 is disordered; that stretch reads LEAASLSQQT…KSDSQESRAG (191 aa). The segment covering 51-61 has biased composition (polar residues); that stretch reads SLSQQTPSLPG. 3 positions are modified to phosphoserine: S62, S64, and S105. The segment covering 129 to 138 has biased composition (basic and acidic residues); it reads GEEKGKRKCQ. Positions 139 to 183 are enriched in polar residues; it reads EYSSLHLTQPLDSVDQTVHNSRTSTATIDPSKPSPESMSPNSSHT. Residues S172 and S177 each carry the phosphoserine modification. The segment covering 184–203 has biased composition (basic residues); the sequence is LSRKQWRNRQKNKRRHKNKF. H282, G317, D335, D347, M348, and C364 together coordinate S-adenosyl-L-methionine.

Belongs to the methyltransferase superfamily. RRP8 family. As to quaternary structure, component of the eNoSC complex, composed of SIRT1, SUV39H1 and RRP8.

The protein resides in the nucleus. It localises to the nucleolus. Functionally, essential component of the eNoSC (energy-dependent nucleolar silencing) complex, a complex that mediates silencing of rDNA in response to intracellular energy status and acts by recruiting histone-modifying enzymes. The eNoSC complex is able to sense the energy status of cell: upon glucose starvation, elevation of NAD(+)/NADP(+) ratio activates SIRT1, leading to histone H3 deacetylation followed by dimethylation of H3 at 'Lys-9' (H3K9me2) by SUV39H1 and the formation of silent chromatin in the rDNA locus. In the complex, RRP8 binds to H3K9me2 and probably acts as a methyltransferase. Its substrates are however unknown. This is Ribosomal RNA-processing protein 8 (Rrp8) from Mus musculus (Mouse).